The sequence spans 370 residues: Vasopressin V2 receptor (370 aa).

The segment covering 1–10 has biased composition (polar residues); that stretch reads MLLASTTSAV. The disordered stretch occupies residues 1 to 26; the sequence is MLLASTTSAVPRTLSPPTPAGNGSRE. Residues 1 to 37 are Extracellular-facing; that stretch reads MLLASTTSAVPRTLSPPTPAGNGSRELLDTRDPLLVQ. N-linked (GlcNAc...) asparagine glycosylation is present at asparagine 22. Residues 38 to 62 traverse the membrane as a helical segment; it reads AELALLSTVFVAVALSNGLVLGALA. The Cytoplasmic portion of the chain corresponds to 63–76; it reads RRVRRGRWAPMHVF. A helical membrane pass occupies residues 77–97; the sequence is IGHLCLADLAVALFQVLPQLA. Over 98–112 the chain is Extracellular; it reads WDATDRFRGPDALCR. A helical transmembrane segment spans residues 113-134; it reads AVKYLQMVGMYASSYMILAMTL. At 135 to 158 the chain is on the cytoplasmic side; the sequence is DRHRAICRPMLAYRHGGGARWNRP. Residues 159–179 traverse the membrane as a helical segment; that stretch reads VLVAWAFSLILSLPQLFIFAQ. Residues 180 to 199 are Extracellular-facing; that stretch reads RDVGNGSGVLDCWAHFAEPW. The chain crosses the membrane as a helical span at residues 200 to 219; sequence GLRAYVTWIALMVFVAPALG. The Cytoplasmic portion of the chain corresponds to 220 to 270; sequence IAACQVLIFREIHSSLVPGPAERAGGCRGGHRTGSPSEGARVSAAMAKTVR. A helical membrane pass occupies residues 271–292; the sequence is MTLVIVIVYVLCWAPFFLVQLW. Residues 293-307 are Extracellular-facing; sequence AAWDPQAPLEGAPFV. A helical transmembrane segment spans residues 308 to 327; sequence LLMLLASLNSCTNPWIYAFF. Over 328 to 370 the chain is Cytoplasmic; the sequence is SSSVSSELRSLFCWARSRAPPSLGPQEESCATASSFLAKDTSS. A lipid anchor (S-palmitoyl cysteine) is attached at cysteine 340.

The protein belongs to the G-protein coupled receptor 1 family. Vasopressin/oxytocin receptor subfamily. Interacts with ARRDC4. Identified in a complex containing at least ARRDC4, V2R and HGS. Interacts with TMEM147.

The protein localises to the cell membrane. Receptor for arginine vasopressin. The activity of this receptor is mediated by G proteins which activate adenylate cyclase. Involved in renal water reabsorption. The protein is Vasopressin V2 receptor (AVPR2) of Canis lupus familiaris (Dog).